Consider the following 714-residue polypeptide: MLVHLFRVGIRGGPVPRWSLQSLRFQTFSAARSSDDQFSSCLLRAVAQLRSQLRAHLPRSPPASHRSTSAWCWVGGTLVVPAVLWQHPRFCLIALCEAKGSPPAQPTRARELRFKWKLFWHFLHPHLLALGLAIVLALGAALVNVQIPLLLGQLVEIVAKYTREHVGSFVSESRRLSIQLLLLYGVQGLLTFGYLVLLSHMGERMAMDMRKALFSSLLRQDIAFFDAKKTGQLVSRLTTDVQEFKSSFKLVISQGLRSSTQVIGSLMTLSILSPRLTLMLAVVTPALMGVGTLMGSGLRKLSRQCQEQIARATGVADEALGSVRTVRAFAMEKREEERYQAELESCCCKAEELGRGIALFQGLSNIAFNCMVLGTLFIGGSLVAGQQLKGGDLMSFLVASQTVQRSMASLSVLFGQVVRGLSAGARVFEYMSLSPVIPLTGGYSIPSKDLRGSITFQNVSFSYPCRPGFNVLKNFTLKLPPGKIVALVGQSGGGKTTVASLLERFYDPTAGVVTLDGHDLRTLDPSWLRGQVIGFISQEPVLFATTIMENIRFGKLDASDEEVYTAARKANAHEFISSFPDGYSTVVGERGTTLSGGQKQRLAIARALIKRPTVLILDEATSALDAESERIVQEALDRASAGRTVLVIAHRLSTVRAAHSIIVMANGQVCEAGTHEELLQKGGLYAELIRRQALDASLPSAPPAEKPEDHRSCQ.

Residues 1 to 25 (MLVHLFRVGIRGGPVPRWSLQSLRF) constitute a mitochondrion transit peptide. The next 4 helical transmembrane spans lie at 127 to 147 (LLAL…NVQI), 178 to 198 (IQLL…LVLL), 278 to 298 (LMLA…GSGL), and 365 to 385 (NIAF…LVAG). The ABC transmembrane type-1 domain maps to 132–419 (LAIVLALGAA…LSVLFGQVVR (288 aa)). The ABC transporter domain occupies 454–691 (ITFQNVSFSY…GGLYAELIRR (238 aa)). Position 489–496 (489–496 (GQSGGGKT)) interacts with ATP.

This sequence belongs to the ABC transporter superfamily. ABCB family. Multidrug resistance exporter (TC 3.A.1.201) subfamily. As to quaternary structure, the mitochondrial potassium channel (mitoK(ATP)) is composed of 4 subunits of CCDC51/MITOK and 4 subunits of ABCB8/MITOSUR. Physically interacts with PAAT. Interacts with Neuropilin-1 (NRP1) in mitochondria. In terms of tissue distribution, strong expression is found in the heart, brain and testis. In the testis, expressed both in the somatic Sertoli cells and peritubular cells and in the germline (spermatogonia and pachytene spermatocytes). Also expressed in the lung, liver, intestine and kidney.

Its subcellular location is the mitochondrion inner membrane. With respect to regulation, channel activity inhibited by ATP via ABCB8/MITOSUR subunit. In terms of biological role, ATP-binding subunit of the mitochondrial ATP-gated potassium channel (mitoK(ATP)). v. An increase in ATP intracellular levels closes the channel, inhibiting K(+) transport, whereas a decrease in ATP levels enhances K(+) uptake in the mitochondrial matrix. Plays a role in mitochondrial iron transport. Required for maintenance of normal cardiac function, possibly by influencing mitochondrial iron export and regulating the maturation of cytosolic iron sulfur cluster-containing enzymes. The sequence is that of Mitochondrial potassium channel ATP-binding subunit from Rattus norvegicus (Rat).